We begin with the raw amino-acid sequence, 318 residues long: MVETQMDKLGFLLNHIGKQITTKVLSNAHITQTMKEIILENNSVNVDGGAAKNVSKGKSPPKEKKHWTEFESWEQLSKSKRSFKEYWTERNEIVNTLLLNWDNVRAAIKKFLNDDREWCGRINMINGVPEIVEIIPSPYKAGENIYFGSEAMIPAEIYSRVANKPAMFVFHTHPNLGSCCGGMPSICDISTTLRYLLMGWTAGHLIISSNQVGMLTVDKRIIIDLWANENPRWLMAQKILDIFMMLTSRRSLVNPWTLRDLKKILQDYGIEYIIFPSNDFFIYEDVRLLMISKKWTNFFTLHELLNDLETIETKTSST.

This sequence belongs to the asfivirus F317L family.

It is found in the virion. This is an uncharacterized protein from African swine fever virus (isolate Tick/Malawi/Lil 20-1/1983) (ASFV).